The primary structure comprises 139 residues: Ribonuclease VapC39 (139 aa).

Positions 4-133 constitute a PINc domain; it reads LLDVNVLIAL…DAALADSASA (130 aa). Residues aspartate 6 and aspartate 106 each coordinate Mg(2+).

This sequence belongs to the PINc/VapC protein family. Mg(2+) serves as cofactor.

Toxic component of a type II toxin-antitoxin (TA) system. An RNase. Its toxic effect is neutralized by coexpression with cognate antitoxin VapB39. The chain is Ribonuclease VapC39 from Mycobacterium tuberculosis (strain CDC 1551 / Oshkosh).